Here is a 326-residue protein sequence, read N- to C-terminus: Adenosine receptor A1 (326 aa).

Topologically, residues 1–10 (MPPSISAFQA) are extracellular. A helical membrane pass occupies residues 11-33 (AYIGIEVLIALVSVPGNVLVIWA). Over 34–46 (VKVNQALRDATFC) the chain is Cytoplasmic. Residues 47 to 69 (FIVSLAVADVAVGALVIPLAILI) form a helical membrane-spanning segment. Over 70 to 80 (NIGPQTYFHTC) the chain is Extracellular. A disulfide bridge links Cys80 with Cys169. A helical transmembrane segment spans residues 81–102 (LMVACPVLILTQSSILALLAIA). The Cytoplasmic segment spans residues 103 to 123 (VDRYLRVKIPLRYKMVVTPRR). Residues 124-146 (AAVAIAGCWILSFVVGLTPMFGW) traverse the membrane as a helical segment. Residues 147–176 (NNLSAVERAWAANGSMGEPVIKCEFEKVIS) lie on the Extracellular side of the membrane. Asn159 is a glycosylation site (N-linked (GlcNAc...) asparagine). A helical membrane pass occupies residues 177 to 201 (MEYMVYFNFFVWVLPPLLLMVLIYL). Residues 202–235 (EVFYLIRKQLNKKVSASSGDPQKYYGKELKIAKS) lie on the Cytoplasmic side of the membrane. A helical transmembrane segment spans residues 236–259 (LALILFLFALSWLPLHILNCITLF). Over 260–267 (CPSCHKPS) the chain is Extracellular. The helical transmembrane segment at 268 to 292 (ILTYIAIFLTHGNSAMNPIVYAFRI) threads the bilayer. Over 293–326 (QKFRVTFLKIWNDHFRCQPAPPIDEDLPEERPDD) the chain is Cytoplasmic. Cys309 carries S-palmitoyl cysteine lipidation.

It belongs to the G-protein coupled receptor 1 family.

The protein resides in the cell membrane. Receptor for adenosine. The activity of this receptor is mediated by G proteins which inhibit adenylyl cyclase. This chain is Adenosine receptor A1 (ADORA1), found in Homo sapiens (Human).